Here is a 995-residue protein sequence, read N- to C-terminus: Epididymis-specific alpha-mannosidase (995 aa).

An N-terminal signal peptide occupies residues 1–21; it reads MGPHSWLPLFMQLALLGPQWA. Histidine 36, aspartate 38, and aspartate 151 together coordinate Zn(2+). Aspartate 151 functions as the Nucleophile in the catalytic mechanism. The N-linked (GlcNAc...) asparagine glycan is linked to asparagine 285. Histidine 411 contacts Zn(2+). Asparagine 593, asparagine 625, asparagine 657, asparagine 733, asparagine 793, asparagine 875, and asparagine 977 each carry an N-linked (GlcNAc...) asparagine glycan. The tract at residues 956–977 is disordered; the sequence is TEDGHHHRGSSRRPLPPLRGPN.

It belongs to the glycosyl hydrolase 38 family. Zn(2+) is required as a cofactor. Post-translationally, processed into a 27 kDa fragment localized on the equatorial segment and the apical rim of the head of mature sperm. As to expression, specific to the caput and corpus of the epididymis.

It localises to the secreted. It carries out the reaction Hydrolysis of terminal, non-reducing alpha-D-mannose residues in alpha-D-mannosides.. Can digest both p-nitro-phenyl-alpha-D-mannoside and high mannose oligosaccharide (Man(8)-GlcNAc(2)). May be involved in sperm maturation. Has a possible role in specific sperm-egg interaction since sperm surface mannosidase acts like a receptor for mannose-containing oligosaccharides located on the zona pellucida. This is Epididymis-specific alpha-mannosidase (MAN2B2) from Sus scrofa (Pig).